Reading from the N-terminus, the 325-residue chain is MNWEVVKLRLNMALATLGITLLGFALALAVADYAFGAQFGVGLILSILIFIFFLNIIQWLFGPYMINWAYRTVEVTPTDPVYGWLYSTVAEVAKYNGFREVPKVYIADVPFPNAFAYGSPIAGKRIAFTLPILKLLNRDEIMAVAGHELGHLKHRDVELLMAVGLIPALIYYLGWWLFWGGLFSGGGNGRGNNGGLVFLLGIIMMAVSFVFQLLVLSLNRMREAYADVNSALTVPGGKENLQLALAKLTLSMDPEALERFKKKSTTNQMASMLFFTNAIEEVPTWNAKELVEIWKTTKVPWYADIFMDHPHPAKRIQLLDKVSKY.

2 consecutive transmembrane segments (helical) span residues 10–30 (LNMALATLGITLLGFALALAV) and 41–61 (VGLILSILIFIFFLNIIQWLF). His147 is a binding site for Zn(2+). Glu148 is an active-site residue. His151 is a binding site for Zn(2+). A run of 2 helical transmembrane segments spans residues 159-179 (LLMAVGLIPALIYYLGWWLFW) and 196-216 (LVFLLGIIMMAVSFVFQLLVL). Glu223 contacts Zn(2+).

It belongs to the peptidase M48B family. Zn(2+) serves as cofactor.

The protein resides in the cell membrane. The polypeptide is Protease HtpX homolog 2 (Saccharolobus solfataricus (strain ATCC 35092 / DSM 1617 / JCM 11322 / P2) (Sulfolobus solfataricus)).